A 226-amino-acid chain; its full sequence is Neuron-specific vesicular protein calcyon (226 aa).

The interval 1–23 (MVKLGCSFSGKPGKETGDQDGAA) is disordered. The Extracellular portion of the chain corresponds to 1-88 (MVKLGCSFSG…EEGRRLPTAR (88 aa)). The helical transmembrane segment at 89–109 (MIAFAMALLGCVLIMYKAIWY) threads the bilayer. Over 110 to 226 (DQFTCPDGFL…AEDVPSQSPK (117 aa)) the chain is Cytoplasmic. The tract at residues 189–226 (TAAAAAAAEGNEPSGKPLDMREKEDPQKAEDVPSQSPK) is disordered. Residues 206–219 (LDMREKEDPQKAED) are compositionally biased toward basic and acidic residues.

Belongs to the NSG family. In terms of assembly, interacts with CLTA. Expressed exclusively in neurons (at protein level). In all age groups, expressed at significantly higher levels in the medial prefrontal and orbital frontal cortices of spontaneously hypertensive rats (SHR), a model of attention deficit-hyperactivity disorder, than Wistar Kyoto (WKY) animals. In the motor cortex, dorsal striatum and nucleus accumbens, expression is significantly elevated in SHR only in younger animals.

Its subcellular location is the cytoplasmic vesicle membrane. It is found in the cell membrane. Interacts with clathrin light chain A and stimulates clathrin self-assembly and clathrin-mediated endocytosis. This is Neuron-specific vesicular protein calcyon (Caly) from Rattus norvegicus (Rat).